Reading from the N-terminus, the 809-residue chain is Phenylalanine--tRNA ligase beta subunit (809 aa).

Positions 39-154 (APPTSKIVVG…EDTPVGQDIR (116 aa)) constitute a tRNA-binding domain. The 76-residue stretch at 405 to 480 (PQRAPVKMRV…RIYGFEKIPA (76 aa)) folds into the B5 domain. Mg(2+)-binding residues include D458, D464, E467, and E468. Residues 707 to 808 (SKFPPVRRDI…RMARAGARLR (102 aa)) enclose the FDX-ACB domain.

The protein belongs to the phenylalanyl-tRNA synthetase beta subunit family. Type 1 subfamily. Tetramer of two alpha and two beta subunits. It depends on Mg(2+) as a cofactor.

It is found in the cytoplasm. It carries out the reaction tRNA(Phe) + L-phenylalanine + ATP = L-phenylalanyl-tRNA(Phe) + AMP + diphosphate + H(+). The protein is Phenylalanine--tRNA ligase beta subunit of Burkholderia lata (strain ATCC 17760 / DSM 23089 / LMG 22485 / NCIMB 9086 / R18194 / 383).